The chain runs to 321 residues: tRNA(Ile)-lysidine synthase (321 aa).

21 to 26 contributes to the ATP binding site; sequence SYGSDS.

Belongs to the tRNA(Ile)-lysidine synthase family.

The protein localises to the cytoplasm. The enzyme catalyses cytidine(34) in tRNA(Ile2) + L-lysine + ATP = lysidine(34) in tRNA(Ile2) + AMP + diphosphate + H(+). Its function is as follows. Ligates lysine onto the cytidine present at position 34 of the AUA codon-specific tRNA(Ile) that contains the anticodon CAU, in an ATP-dependent manner. Cytidine is converted to lysidine, thus changing the amino acid specificity of the tRNA from methionine to isoleucine. This is tRNA(Ile)-lysidine synthase from Campylobacter jejuni (strain RM1221).